The following is a 227-amino-acid chain: PKHD-type hydroxylase BURPS668_A1690 (227 aa).

The region spanning 78-178 (KVFPPLFNRY…RVASFFWIQS (101 aa)) is the Fe2OG dioxygenase domain. Residues H96, D98, and H159 each contribute to the Fe cation site. R169 contributes to the 2-oxoglutarate binding site.

Fe(2+) is required as a cofactor. L-ascorbate serves as cofactor.

The protein is PKHD-type hydroxylase BURPS668_A1690 of Burkholderia pseudomallei (strain 668).